The chain runs to 514 residues: ATP synthase subunit alpha (514 aa).

Residue 169–176 participates in ATP binding; that stretch reads GDRQTGKT.

Belongs to the ATPase alpha/beta chains family. In terms of assembly, F-type ATPases have 2 components, CF(1) - the catalytic core - and CF(0) - the membrane proton channel. CF(1) has five subunits: alpha(3), beta(3), gamma(1), delta(1), epsilon(1). CF(0) has three main subunits: a(1), b(2) and c(9-12). The alpha and beta chains form an alternating ring which encloses part of the gamma chain. CF(1) is attached to CF(0) by a central stalk formed by the gamma and epsilon chains, while a peripheral stalk is formed by the delta and b chains.

The protein resides in the cell membrane. It catalyses the reaction ATP + H2O + 4 H(+)(in) = ADP + phosphate + 5 H(+)(out). Its function is as follows. Produces ATP from ADP in the presence of a proton gradient across the membrane. The alpha chain is a regulatory subunit. The sequence is that of ATP synthase subunit alpha from Buchnera aphidicola subsp. Baizongia pistaciae (strain Bp).